A 371-amino-acid chain; its full sequence is Putative ribonuclease 3 (371 aa).

The RNase III domain maps to 10 to 136; sequence AKSVKDKYIP…FLGAVCMAVD (127 aa).

It belongs to the IIV-6 142R family.

The catalysed reaction is Endonucleolytic cleavage to 5'-phosphomonoester.. Its function is as follows. Digests double-stranded RNA. The chain is Putative ribonuclease 3 from Frog virus 3 (isolate Goorha) (FV-3).